We begin with the raw amino-acid sequence, 596 residues long: Chaperone protein DnaK (596 aa).

Threonine 180 is subject to Phosphothreonine; by autocatalysis.

The protein belongs to the heat shock protein 70 family.

Acts as a chaperone. The chain is Chaperone protein DnaK from Thermosipho melanesiensis (strain DSM 12029 / CIP 104789 / BI429).